Reading from the N-terminus, the 1125-residue chain is Transient receptor potential cation channel subfamily A member 1 (1125 aa).

The Cytoplasmic portion of the chain corresponds to 1–721 (MKRGLRRILL…KWCAYGFRAH (721 aa)). ANK repeat units lie at residues 63–94 (ENLCPLHHAAAEGQVELMELIINGSSCEVLNI), 98–127 (YGNTPLHCAAEKNQVESVKFLLSQGANPNL), 131–161 (NMMSPLHIAVHGMYNEVIKVLTEHKATNINL), 165–194 (NGNTALMSTCAKDNSEALQILLEKGAKLCK), 198–227 (WGDYPVHQAAFSGAKKCMELILAYGEKNGY), 239–268 (KKASPLHLAVQSGDLDMIKMCLDNGAHIDM), 272–301 (AKCMALHFAATQGATDIVKLMISSYTGSSD), 309–338 (NQETLLHRASLFDHHDLAEYLISVGADINS), and 342–371 (EGRSPLILATASASWNIVNLLLCKGAKVDI). 5 cysteine pairs are disulfide-bonded: cysteine 193–cysteine 666, cysteine 463–cysteine 666, cysteine 609–cysteine 622, cysteine 622–cysteine 666, and cysteine 634–cysteine 859. Position 395 is a 4-hydroxyproline; transient (proline 395). 5 ANK repeats span residues 413 to 442 (DGCTPLHYACRQGVPVSVNNLLGFNVSIHS), 446 to 475 (DKKSPLHFAASYGRINTCQRLLQDISDTRL), 482 to 511 (HGMTPLHLAAKNGHDKVVQLLLKKGALFLS), 514 to 543 (NGWTALHHASMGGYTQTMKVILDTNLKCTD), and 548 to 577 (EGNTALHFAAREGHAKAVAMLLSYNADILL). Residues cysteine 415 and cysteine 422 each coordinate (E)-cinnamaldehyde. Cysteine 622 contacts (E)-cinnamaldehyde. Cysteine 634 carries the post-translational modification Cysteine sulfenic acid (-SOH); transient; in hyperoxia. (E)-cinnamaldehyde contacts are provided by cysteine 642, cysteine 666, and lysine 712. The chain crosses the membrane as a helical span at residues 722-742 (MMNLGSYCLGLIPMTLLVVKI). Residues 743 to 767 (QPGMAFNSTGIINGTSSTHEERIDT) are Extracellular-facing. Asparagine 749 and asparagine 755 each carry an N-linked (GlcNAc...) asparagine glycan. Residues 768–788 (LNSFPIKICMILVFLSSIFGY) traverse the membrane as a helical segment. Topologically, residues 789-806 (CKEVIQIFQQKRNYFLDY) are cytoplasmic. Positions 791, 794, 808, and 811 each coordinate Ca(2+). The chain crosses the membrane as a helical span at residues 807 to 827 (NNALEWVIYTTSIIFVLPLFL). Topologically, residues 828 to 832 (NIPAY) are extracellular. Residues 833–853 (MQWQCGAIAIFFYWMNFLLYL) traverse the membrane as a helical segment. The Cytoplasmic portion of the chain corresponds to 854-876 (QRFENCGIFIVMLEVIFKTLLRS). Cysteine 859 carries the post-translational modification Cysteine sulfenic acid (-SOH); transient; in hyperoxia. Residues 877 to 897 (TGVFIFLLLAFGLSFYVLLNF) form a helical membrane-spanning segment. Residues 898 to 904 (QDAFSTP) lie on the Extracellular side of the membrane. Residues 905 to 925 (LLSLIQTFSMMLGDINYRDAF) constitute an intramembrane region (pore-forming). Over 926–937 (LEPLFRNELAYP) the chain is Extracellular. The helical transmembrane segment at 938-959 (VLTFGQLIAFTMFVPIVLMNLL) threads the bilayer. The Cytoplasmic portion of the chain corresponds to 960 to 1125 (IGLAVGDIAE…THCSISHPDF (166 aa)). Residues 1044 to 1073 (MEILKQKYRLKDLTSLLEKQHELIKLIIQK) adopt a coiled-coil conformation. An a 1,2-diacyl-sn-glycero-3-phospho-(1D-myo-inositol)-binding site is contributed by 1048–1054 (KQKYRLK).

Belongs to the transient receptor (TC 1.A.4) family. Homotetramer. Interacts with TMEM100. Interacts with EGLN1. Interacts with the scorpion wasabi receptor toxin at the same site that electrophiles but in a non-covalent manner. In terms of processing, TRPA1 activation by electrophiles occurs though covalent modification of specific cysteine residues in the N-terminal cytoplasmic domain. Hydroxylation is required for TRPA1 activity inhibition in normoxia. In hypoxia, the decrease in oxygen concentration diminishes the activity of the hydroxylase EGLN1, thus relieving TRPA1 from inhibition and ultimately leading to channel activation. Post-translationally, oxidation of Cys-634 and Cys-859 in hyperoxia may override the hydroxylase EGLN1-mediated inhibition, causing TRPA1 activation. Expressed in inner ear (at protein level). Specifically expressed in a subset of nociceptive neurons. Expressed in the same neurons that TRPV1. In contrast, it is not expressed in neurons expressing TRPM8. Expressed in the superior cervical ganglion of vagus nerve. Expressed in the inferior ganglion (nodose ganglion) of vagus nerve. Expressed in dorsal root ganglia neurons.

It is found in the cell membrane. The enzyme catalyses Ca(2+)(in) = Ca(2+)(out). It carries out the reaction Mg(2+)(in) = Mg(2+)(out). The catalysed reaction is Na(+)(in) = Na(+)(out). It catalyses the reaction K(+)(in) = K(+)(out). The enzyme catalyses Zn(2+)(in) = Zn(2+)(out). Its activity is regulated as follows. Electrophilic ligands activate the channel by covalent modification of intracellular cysteines. Cys-622 plays a key role in covalent binding of electrophiles. Extracellular Ca(2+) both potentiates and inactivates TRPA1; a rapid potentiation follows by slow desensitization. Activated by increase in intracellular Ca(2+) concentration. Inhibited by the potent blocker of TRPV channels ruthenium red, A-967079. Activated by icilin, sulfhydryl reactive agent MTSEA, N-methyl maleimide (NMM), and PF-4840154. Also activated by hyperoxia. Activated by intracellular Zn(2+). TRPA1 activation may critically depend on the presence of small intracellular compounds such as polyphosphates. Functionally, ligand-activated Ca(2+)-permeable, nonselective cation channel. Involved in pain detection and possibly also in cold perception, oxygen concentration perception, cough, itch, and inner ear function. Has a relatively high Ca(2+) selectivity, with a preference for divalent over monovalent cations (Ca(2+) &gt; Ba(2+) &gt; Mg(2+) &gt; NH4(+) &gt; Li(+) &gt; K(+)), the influx of cation into the cytoplasm, leads to membrane depolarization. Has a central role in the pain response to endogenous inflammatory mediators, such as bradykinin and to a diverse array of irritants. Activated by a large variety of structurally unrelated electrophilic and non-electrophilic chemical compounds, such as allylthiocyanate (AITC) from mustard oil or wasabi, cinnamaldehyde, diallyl disulfide (DADS) from garlic, and acrolein, an environmental irritant. Electrophilic ligands activate TRPA1 by interacting with critical N-terminal Cys residues in a covalent manner. Non-electrophile agonists bind at distinct sites in the transmembrane domain to promote channel activation. Also acts as an ionotropic cannabinoid receptor by being activated by delta(9)-tetrahydrocannabinol (THC), the psychoactive component of marijuana. May be a component for the mechanosensitive transduction channel of hair cells in inner ear, thereby participating in the perception of sounds. In Mus musculus (Mouse), this protein is Transient receptor potential cation channel subfamily A member 1.